An 816-amino-acid chain; its full sequence is MTVKVKFPKDIREYARKEKVKDSLIKLTETALAEAISKFHRRMIVLQGDTLNKAKLAGILAGGAARILSEYIPEMLERKLRDTEQIEVLYATDALGEDTYGRKRFEEFRKHFSLLAPTAELTSVTFKHSRDILGRTFDILVIDLSYDYSPNDLGRIIETVRGGGLIFVLTNPFEKWKDMWTGFHKSLVTPPYTIEDVKKRFNRRLIRKFTEHKGIYIVNTDRMSIERKPGKYRSQATLPEREKVEIPKNIRFPRELYELCLTRGQVEVLKTLEELIEKEGMVVLTADRGRGKSVSIGIASVGLAVSSKKKRFRIVVTAPEPENVQSLMKFAKKSLEVLGYKTKVITDNGLIKEVYAKGIGIRYYPPTKGYRQRAELYIVDEAAGIHVPILHRYLEKERVVFSSTIHGYEGAGRGFSVKFLKKAKEKREYKEVHLSTPIRYAEGDPIEKWLFDVLLLDAEPVELTEEDYELIRKMEVYLEEPDLDDWFENDREDLRHFVGIYVLAHYRNRPSDVALLADAPHHEARVLRLKNGKIVTAIQIAKEGGIPKAVIDKMAKGYKPPGNIIPDMMVKHHYAKEFARLKGYRVVRIATHPDAMDMGLGSKALELLIKEAEEKGLDWVGSGFGASPELIRFWVRNGFAVVHLSPTRNPVSGEYTAIVIKPISEKAKEIVKKANEEFRIRLTEWLGDTHRDLEPEIARWLFESPFGEAVNYPIYLTKTQKRRLEMFIKRILTYDTVVDAVKPLVKLYFLDGWMRPYLDERQIMLLIHRVLQAHDWKETAKLLNRTEMYTMVELRDIVRGLWYYYKHLIKDEEGEK.

Positions 265 and 439 each coordinate ATP. An N-acetyltransferase domain is found at 469–664; the sequence is ELIRKMEVYL…YTAIVIKPIS (196 aa). Residues 589-591, Glu-629, and Arg-636 contribute to the acetyl-CoA site; that span reads IAT.

It belongs to the TmcA family.

It is found in the cytoplasm. The catalysed reaction is cytidine(34) in elongator tRNA(Met) + acetyl-CoA + ATP + H2O = N(4)-acetylcytidine(34) in elongator tRNA(Met) + ADP + phosphate + CoA + H(+). It carries out the reaction a cytidine in RNA + acetyl-CoA + ATP + H2O = an N(4)-acetylcytidine in RNA + ADP + phosphate + CoA + H(+). It catalyses the reaction a cytidine in tRNA + acetyl-CoA + ATP + H2O = an N(4)-acetylcytidine in tRNA + ADP + phosphate + CoA + H(+). The enzyme catalyses a cytidine in mRNA + acetyl-CoA + ATP + H2O = an N(4)-acetylcytidine in mRNA + ADP + phosphate + CoA + H(+). Its function is as follows. Catalyzes the formation of N(4)-acetylcytidine (ac(4)C) at the wobble position of tRNA(Met), by using acetyl-CoA as an acetyl donor and ATP (or GTP). Functionally, catalyzes the formation of 233 N(4)-acetylcytidine (ac(4)C) sites in RNA, on the middle C of a CCG motif. Modifications are found in rRNA, ncRNA, mRNA and tRNA. More acetylation is observed at 85 than at 65 or 75 degrees Celsius. This Pyrococcus furiosus (strain ATCC 43587 / DSM 3638 / JCM 8422 / Vc1) protein is tRNA(Met) cytidine acetyltransferase TmcA.